A 420-amino-acid polypeptide reads, in one-letter code: Serine protease inhibitor A3B (420 aa).

Residues 1 to 17 (MAFIAALGLLMAEICPA) form the signal peptide. 2 N-linked (GlcNAc...) asparagine glycosylation sites follow: Asn-104 and Asn-349. Positions 367-392 (GTEGDAITIVGYNFMSAKLKPVFVKF) are RCL.

The protein belongs to the serpin family.

The protein resides in the secreted. This Mus musculus (Mouse) protein is Serine protease inhibitor A3B (Serpina3b).